Consider the following 282-residue polypeptide: NADPH-dependent 7-cyano-7-deazaguanine reductase (282 aa).

Residue 88 to 90 (IES) participates in substrate binding. Residue 90-91 (SK) coordinates NADPH. Cysteine 190 acts as the Thioimide intermediate in catalysis. Catalysis depends on aspartate 197, which acts as the Proton donor. Residue 229–230 (HE) participates in substrate binding. An NADPH-binding site is contributed by 258-259 (RG).

This sequence belongs to the GTP cyclohydrolase I family. QueF type 2 subfamily. Homodimer.

The protein resides in the cytoplasm. The catalysed reaction is 7-aminomethyl-7-carbaguanine + 2 NADP(+) = 7-cyano-7-deazaguanine + 2 NADPH + 3 H(+). It functions in the pathway tRNA modification; tRNA-queuosine biosynthesis. Catalyzes the NADPH-dependent reduction of 7-cyano-7-deazaguanine (preQ0) to 7-aminomethyl-7-deazaguanine (preQ1). This is NADPH-dependent 7-cyano-7-deazaguanine reductase from Shigella dysenteriae serotype 1 (strain Sd197).